Here is a 298-residue protein sequence, read N- to C-terminus: N-acetylmuramic acid 6-phosphate etherase (298 aa).

Residues 55 to 218 (IHAQVSGGGR…STGLMIKSGK (164 aa)) enclose the SIS domain. The active-site Proton donor is Glu-83. Glu-114 is an active-site residue.

This sequence belongs to the GCKR-like family. MurNAc-6-P etherase subfamily. As to quaternary structure, homodimer.

It catalyses the reaction N-acetyl-D-muramate 6-phosphate + H2O = N-acetyl-D-glucosamine 6-phosphate + (R)-lactate. It functions in the pathway amino-sugar metabolism; 1,6-anhydro-N-acetylmuramate degradation. Its pathway is amino-sugar metabolism; N-acetylmuramate degradation. It participates in cell wall biogenesis; peptidoglycan recycling. Specifically catalyzes the cleavage of the D-lactyl ether substituent of MurNAc 6-phosphate, producing GlcNAc 6-phosphate and D-lactate. Together with AnmK, is also required for the utilization of anhydro-N-acetylmuramic acid (anhMurNAc) either imported from the medium or derived from its own cell wall murein, and thus plays a role in cell wall recycling. The chain is N-acetylmuramic acid 6-phosphate etherase from Escherichia coli O7:K1 (strain IAI39 / ExPEC).